The following is a 128-amino-acid chain: C-C motif chemokine 28 (128 aa).

An N-terminal signal peptide occupies residues 1-24 (MQQTGLTLALVALAVCVALPSSEA). Disulfide bonds link C32-C60 and C33-C75. Residues 89-128 (EQAAKKNTKGNICHKKQAGKRKSKGAHQEKPEIHSHKSPY) form a disordered region. The span at 94-113 (KNTKGNICHKKQAGKRKSKG) shows a compositional bias: basic residues. Residues 114–128 (AHQEKPEIHSHKSPY) show a composition bias toward basic and acidic residues.

Belongs to the intercrine beta (chemokine CC) family.

The protein resides in the secreted. Chemotactic activity for resting CD4, CD8 T-cells and eosinophils. Binds to CCR3 and CCR10 and induces calcium mobilization in a dose-dependent manner. This chain is C-C motif chemokine 28 (CCL28), found in Canis lupus familiaris (Dog).